A 384-amino-acid chain; its full sequence is MAKHLFTSESVSEGHPDKIADQISDAVLDAILQQDPKARVACETYVKTGMVLVGGEITTSAWVDIEEITRNTVREIGYVHSDMGFDANSCAVLSAIGKQSPDINQGVDRADPLEQGAGDQGLMFGYATNETDVLMPAPITYAHRLVQRQAEVRKNGTLPWLRPDAKSQVTFQYDDGKIVGIDAVVLSTQHAEDIDQKSLQEAVMEEIIKPILPSEWLNTSTKFFINPTGRFVIGGPMGDCGLTGRKIIVDTYGGMARHGGGAFSGKDPSKVDRSAAYAARYVAKNIVAAGLADRCEIQVSYAIGVAEPTSIMVETFGTEKVPAEQLILLVREFFDLRPYGLIQMLDLLHPIYKETAAYGHFGRENFPWEKTDKAQLLRDAAGLK.

ATP is bound at residue H15. A Mg(2+)-binding site is contributed by D17. E43 serves as a coordination point for K(+). E56 and Q99 together coordinate L-methionine. The tract at residues 99–109 is flexible loop; that stretch reads QSPDINQGVDR. Residues 164–166, 230–231, D239, 245–246, A262, and K266 contribute to the ATP site; these read DAK, RF, and RK. Residue D239 coordinates L-methionine. An L-methionine-binding site is contributed by K270.

This sequence belongs to the AdoMet synthase family. In terms of assembly, homotetramer; dimer of dimers. Mg(2+) is required as a cofactor. It depends on K(+) as a cofactor.

The protein resides in the cytoplasm. The catalysed reaction is L-methionine + ATP + H2O = S-adenosyl-L-methionine + phosphate + diphosphate. Its pathway is amino-acid biosynthesis; S-adenosyl-L-methionine biosynthesis; S-adenosyl-L-methionine from L-methionine: step 1/1. Functionally, catalyzes the formation of S-adenosylmethionine (AdoMet) from methionine and ATP. The overall synthetic reaction is composed of two sequential steps, AdoMet formation and the subsequent tripolyphosphate hydrolysis which occurs prior to release of AdoMet from the enzyme. This Salmonella choleraesuis (strain SC-B67) protein is S-adenosylmethionine synthase.